Reading from the N-terminus, the 97-residue chain is Large ribosomal subunit protein bL28 (97 aa).

This sequence belongs to the bacterial ribosomal protein bL28 family.

This is Large ribosomal subunit protein bL28 from Brucella ovis (strain ATCC 25840 / 63/290 / NCTC 10512).